The sequence spans 330 residues: PDZ and LIM domain protein 4 (330 aa).

In terms of domain architecture, PDZ spans 1–84 (MTHSVTLRGP…HLTLSVSRPE (84 aa)). Disordered stretches follow at residues 104–153 (DPES…SNEA) and 219–242 (EAGE…ASKL). Phosphoserine is present on residues S107, S111, S115, S118, S119, S124, and S134. The span at 108 to 122 (QDCSPATSRRSSVSG) shows a compositional bias: polar residues. An LIM zinc-binding domain is found at 255-305 (CTRCGHGIVGTIVKARDKLYHPECFMCSDCGLNLKQRGYFFLDERLYCENH).

In terms of assembly, homodimer. Interacts (via C-terminus only or via combined C-terminus and LIM domain, but not LIM domain only) with PTPN13 (via the second or fourth PDZ domains). Found in a complex with PTPN13 and TRIP6. Interacts (via PDZ domain) with ACTN1 and ACTN2 (via C-terminal SDL residues). Interacts (via PDZ domain) with TRIP6 (via the second LIM domain or via the third LIM domain plus C-terminus). Interacts (via LIM domain) with GRIA1 (via C-terminus); this interaction as well as the interaction with alpha-actinin is required for their colocalization in early endosomes. Interacts with PDLIM1. Forms (via LIM domain) a heterodimer with PDLIM3. Interacts directly with SRC (via kinase domain and to a lesser extent the SH2 domain). Post-translationally, phosphorylated on tyrosine residue(s). Can be dephosphorylated by PTPN13. Expressed in several non-muscle tissues including lung, brain, ovary and uterus, and especially in epithelial cells at 14 dpc. In the uterus, high expression in the glandular epithelium, but absent in the simple columnar epithelium lining the uterus cavity.

Its subcellular location is the cytoplasm. It localises to the cytoskeleton. It is found in the cell projection. The protein localises to the dendritic spine. The protein resides in the early endosome membrane. Its subcellular location is the recycling endosome membrane. It localises to the nucleus. It is found in the perinuclear region. The protein localises to the lamellipodium. The protein resides in the synapse. Its subcellular location is the synaptosome. Functionally, suppresses SRC activation by recognizing and binding to active SRC and facilitating PTPN13-mediated dephosphorylation of SRC 'Tyr-419' leading to its inactivation. Inactivated SRC dissociates from this protein allowing the initiation of a new SRC inactivation cycle. Involved in reorganization of the actin cytoskeleton. In nonmuscle cells, binds to ACTN1 (alpha-actinin-1), increases the affinity of ACTN1 to F-actin (filamentous actin), and promotes formation of actin stress fibers. Involved in regulation of the synaptic AMPA receptor transport in dendritic spines of hippocampal pyramidal neurons directing the receptors toward an insertion at the postsynaptic membrane. Links endosomal surface-internalized GRIA1-containing AMPA receptors to the alpha-actinin/actin cytoskeleton. Increases AMPA receptor-mediated excitatory postsynaptic currents in neurons. This Mus musculus (Mouse) protein is PDZ and LIM domain protein 4 (Pdlim4).